Consider the following 179-residue polypeptide: ATP synthase subunit delta (179 aa).

Belongs to the ATPase delta chain family. F-type ATPases have 2 components, F(1) - the catalytic core - and F(0) - the membrane proton channel. F(1) has five subunits: alpha(3), beta(3), gamma(1), delta(1), epsilon(1). F(0) has three main subunits: a(1), b(2) and c(10-14). The alpha and beta chains form an alternating ring which encloses part of the gamma chain. F(1) is attached to F(0) by a central stalk formed by the gamma and epsilon chains, while a peripheral stalk is formed by the delta and b chains.

The protein resides in the cell membrane. F(1)F(0) ATP synthase produces ATP from ADP in the presence of a proton or sodium gradient. F-type ATPases consist of two structural domains, F(1) containing the extramembraneous catalytic core and F(0) containing the membrane proton channel, linked together by a central stalk and a peripheral stalk. During catalysis, ATP synthesis in the catalytic domain of F(1) is coupled via a rotary mechanism of the central stalk subunits to proton translocation. Its function is as follows. This protein is part of the stalk that links CF(0) to CF(1). It either transmits conformational changes from CF(0) to CF(1) or is implicated in proton conduction. The polypeptide is ATP synthase subunit delta (Staphylococcus haemolyticus (strain JCSC1435)).